Consider the following 527-residue polypeptide: Arginine--tRNA ligase (527 aa).

A 'HIGH' region motif is present at residues 112 to 122 (ANPTGPLHIGH).

This sequence belongs to the class-I aminoacyl-tRNA synthetase family. Monomer.

It localises to the cytoplasm. The enzyme catalyses tRNA(Arg) + L-arginine + ATP = L-arginyl-tRNA(Arg) + AMP + diphosphate. The protein is Arginine--tRNA ligase of Nitratiruptor sp. (strain SB155-2).